The following is a 1040-amino-acid chain: Putative protein tag-76 (1040 aa).

Polar residues predominate over residues 1 to 15 (MSRRNATSFVDNNTL). Disordered stretches follow at residues 1 to 61 (MSRR…GSVS) and 322 to 367 (RTSK…PGAN). Residues 16-32 (TSSGISGSGSMSPPITS) are compositionally biased toward low complexity. A compositionally biased stretch (polar residues) spans 33–50 (RPASGQASPLTSNGSLSP). The span at 333–356 (GPGGPGGPGGYRGGRGGGRGGSYG) shows a compositional bias: gly residues. One can recognise a PAZ domain in the interval 379 to 486 (FTMDTLSRDT…LPMEHCLIDS (108 aa)). A Piwi domain is found at 660-966 (CIIVVLQSKN…VATRARCHVK (307 aa)).

This chain is Putative protein tag-76 (tag-76), found in Caenorhabditis elegans.